A 388-amino-acid chain; its full sequence is Alanine racemase 2 (388 aa).

The Proton acceptor; specific for D-alanine role is filled by Lys-39. N6-(pyridoxal phosphate)lysine is present on Lys-39. Arg-137 contributes to the substrate binding site. Catalysis depends on Tyr-267, which acts as the Proton acceptor; specific for L-alanine. Residue Met-315 coordinates substrate.

It belongs to the alanine racemase family. Requires pyridoxal 5'-phosphate as cofactor.

The enzyme catalyses L-alanine = D-alanine. The protein operates within amino-acid biosynthesis; D-alanine biosynthesis; D-alanine from L-alanine: step 1/1. Catalyzes the interconversion of L-alanine and D-alanine. May also act on other amino acids. This chain is Alanine racemase 2 (alr2), found in Caldanaerobacter subterraneus subsp. tengcongensis (strain DSM 15242 / JCM 11007 / NBRC 100824 / MB4) (Thermoanaerobacter tengcongensis).